The following is a 428-amino-acid chain: Dihydrolipoyllysine-residue acetyltransferase component of pyruvate dehydrogenase complex (428 aa).

A Lipoyl-binding domain is found at 2–77; that stretch reads AFEFKLPDIG…TVGQTLITLD (76 aa). K43 is modified (N6-lipoyllysine). Positions 88-123 are disordered; it reads GQEQEEAKKEEKTETVSKEEKVDAVAPNAPAAEAEA. The segment covering 89–110 has biased composition (basic and acidic residues); that stretch reads QEQEEAKKEEKTETVSKEEKVD. Residues 111–123 are compositionally biased toward low complexity; the sequence is AVAPNAPAAEAEA. The Peripheral subunit-binding (PSBD) domain occupies 130–167; it reads IAMPSVRKYAREKGVDIRLVQGTGKNGRVLKEDIDAFL. Residues 177–194 are compositionally biased toward low complexity; it reads AAEEKAAPAAAKPATTEG. The tract at residues 177 to 201 is disordered; it reads AAEEKAAPAAAKPATTEGEFPETRE. Residue H399 is part of the active site.

Belongs to the 2-oxoacid dehydrogenase family. As to quaternary structure, forms a 60-polypeptide structural core with icosahedral symmetry. The cofactor is (R)-lipoate.

It carries out the reaction N(6)-[(R)-dihydrolipoyl]-L-lysyl-[protein] + acetyl-CoA = N(6)-[(R)-S(8)-acetyldihydrolipoyl]-L-lysyl-[protein] + CoA. Functionally, the pyruvate dehydrogenase complex catalyzes the overall conversion of pyruvate to acetyl-CoA and CO(2). It contains multiple copies of three enzymatic components: pyruvate dehydrogenase (E1), dihydrolipoamide acetyltransferase (E2) and lipoamide dehydrogenase (E3). In Geobacillus stearothermophilus (Bacillus stearothermophilus), this protein is Dihydrolipoyllysine-residue acetyltransferase component of pyruvate dehydrogenase complex (pdhC).